The sequence spans 359 residues: Protein-L-isoaspartate O-methyltransferase domain-containing protein 2 (359 aa).

Gly-2 is lipidated: N-myristoyl glycine. Residue Ser-64 is part of the active site. AdoMet binding motif regions lie at residues 85–94 (LNLGSGTGYL), 160–164 (YDRVY), and 181–191 (LKVGGILVMPL). Residues 240-250 (VRSLQDLARLA) are BC-box. Residues 301 to 328 (SNPSDDTSCEDAEEDRREVAERTLQETK) are disordered. Positions 314–328 (EDRREVAERTLQETK) are enriched in basic and acidic residues. Residues 343-346 (LPLP) form a CUL-box region.

It belongs to the methyltransferase superfamily. L-isoaspartyl/D-aspartyl protein methyltransferase family.

It is found in the cytoplasm. Functionally, may act as a substrate recognition component of an ECS (Elongin BC-CUL5-SOCS-box protein) E3 ubiquitin ligase complex which mediates the ubiquitination and subsequent proteasomal degradation of target proteins. May bind to the methyltransferase cofactor S-adenosylmethionine (AdoMet) via the N-terminal AdoMet binding motif, but probably does not display methyltransferase activity. The polypeptide is Protein-L-isoaspartate O-methyltransferase domain-containing protein 2 (Pcmtd2) (Mus musculus (Mouse)).